Reading from the N-terminus, the 392-residue chain is Na(+)/H(+) antiporter NhaA (392 aa).

The next 11 helical transmembrane spans lie at 16–36, 58–78, 93–113, 124–144, 153–173, 176–196, 199–219, 257–277, 295–315, 328–348, and 362–382; these read ILLI…LSAA, LLLW…GLEV, ITLP…IFIL, GWAI…SLLG, IFLM…IALF, TDLS…LFIM, MDVA…VSVL, DLHY…NAGV, VMLG…WLAI, WMML…SLFV, and ADKL…YLIL.

The protein belongs to the NhaA Na(+)/H(+) (TC 2.A.33) antiporter family.

It localises to the cell inner membrane. It carries out the reaction Na(+)(in) + 2 H(+)(out) = Na(+)(out) + 2 H(+)(in). Functionally, na(+)/H(+) antiporter that extrudes sodium in exchange for external protons. The protein is Na(+)/H(+) antiporter NhaA of Sulfurovum sp. (strain NBC37-1).